Reading from the N-terminus, the 410-residue chain is Transforming growth factor beta-3 proprotein (410 aa).

The first 23 residues, 1–23 (MHLQRALVVLALLNLATISLSLS), serve as a signal peptide directing secretion. 3 N-linked (GlcNAc...) asparagine glycosylation sites follow: N72, N133, and N140. The Cell attachment site motif lies at 259-261 (RGD). Q291 carries the N5-methylglutamine modification. 4 disulfides stabilise this stretch: C305–C314, C313–C376, C342–C407, and C346–C409.

Belongs to the TGF-beta family. In terms of assembly, interacts with ASPN. Latency-associated peptide: Homodimer; disulfide-linked. Latency-associated peptide: Interacts with Transforming growth factor beta-3 (TGF-beta-3) chain; interaction is non-covalent and maintains (TGF-beta-3) in a latent state. Latency-associated peptide: Interacts with LRRC32/GARP; leading to regulate activation of TGF-beta-3 and promote epithelial fusion during palate development. Latency-associated peptide: Interacts (via cell attachment site) with integrins, leading to release of the active TGF-beta-3. Transforming growth factor beta-3: Homodimer; disulfide-linked. Transforming growth factor beta-3: Interacts with TGF-beta receptors (TGFBR1 and TGFBR2), leading to signal transduction. Post-translationally, transforming growth factor beta-3 proprotein: The precursor proprotein is cleaved in the Golgi apparatus to form Transforming growth factor beta-3 (TGF-beta-3) and Latency-associated peptide (LAP) chains, which remain non-covalently linked, rendering TGF-beta-3 inactive. In terms of processing, methylated at Gln-291 by N6AMT1. Expressed in mammary glands with a slight increase in expression prior to lactation and again increasing at the onset of involution, expression peaks at day 3 of involution.

The protein resides in the secreted. The protein localises to the extracellular space. It is found in the extracellular matrix. Transforming growth factor beta-3 proprotein: Precursor of the Latency-associated peptide (LAP) and Transforming growth factor beta-3 (TGF-beta-3) chains, which constitute the regulatory and active subunit of TGF-beta-3, respectively. In terms of biological role, required to maintain the Transforming growth factor beta-3 (TGF-beta-3) chain in a latent state during storage in extracellular matrix. Associates non-covalently with TGF-beta-3 and regulates its activation via interaction with 'milieu molecules', such as LTBP1 and LRRC32/GARP, that control activation of TGF-beta-3. Interaction with integrins results in distortion of the Latency-associated peptide chain and subsequent release of the active TGF-beta-3. Its function is as follows. Transforming growth factor beta-3: Multifunctional protein that regulates embryogenesis and cell differentiation and is required in various processes such as secondary palate development. Activation into mature form follows different steps: following cleavage of the proprotein in the Golgi apparatus, Latency-associated peptide (LAP) and Transforming growth factor beta-3 (TGF-beta-3) chains remain non-covalently linked rendering TGF-beta-3 inactive during storage in extracellular matrix. At the same time, LAP chain interacts with 'milieu molecules', such as LTBP1 and LRRC32/GARP that control activation of TGF-beta-3 and maintain it in a latent state during storage in extracellular milieus. TGF-beta-3 is released from LAP by integrins: integrin-binding results in distortion of the LAP chain and subsequent release of the active TGF-beta-3. Once activated following release of LAP, TGF-beta-3 acts by binding to TGF-beta receptors (TGFBR1 and TGFBR2), which transduce signal. This chain is Transforming growth factor beta-3 proprotein, found in Mus musculus (Mouse).